A 1123-amino-acid chain; its full sequence is Telomerase reverse transcriptase (1123 aa).

Disordered regions lie at residues 191-242 (ENKR…KTTK) and 410-439 (GTTSQSSRRQKADKLPHGSSSSQTGKPKCP). The segment covering 201–210 (QPPTKRQWLS) has biased composition (polar residues). Residues 596-929 (LVDDAEAESS…PFVRWTGLLI (334 aa)) enclose the Reverse transcriptase domain. Residues Asp691, Asp860, and Asp861 each coordinate Mg(2+).

This sequence belongs to the reverse transcriptase family. Telomerase subfamily. Component of the telomerase ribonucleoprotein complex. Interacts with POT1A.

It is found in the nucleus. It localises to the chromosome. The protein localises to the telomere. It carries out the reaction DNA(n) + a 2'-deoxyribonucleoside 5'-triphosphate = DNA(n+1) + diphosphate. Its function is as follows. Telomerase is a ribonucleoprotein enzyme essential for the replication of chromosome termini in most eukaryotes. It elongates telomeres. It is a reverse transcriptase that adds simple sequence repeats to chromosome ends by copying a template sequence within the RNA component of the enzyme. Required to prevent genome instability induced by breakage-fusion-bridge (BFB) cycles. Can extend completely non-telomeric sequences using RNA template in vitro. The sequence is that of Telomerase reverse transcriptase (TERT) from Arabidopsis thaliana (Mouse-ear cress).